The sequence spans 279 residues: NADPH-dependent 7-cyano-7-deazaguanine reductase (279 aa).

Position 86-88 (86-88) interacts with substrate; it reads IES. NADPH is bound at residue 88–89; that stretch reads SK. Cys187 acts as the Thioimide intermediate in catalysis. Asp194 functions as the Proton donor in the catalytic mechanism. 226-227 serves as a coordination point for substrate; that stretch reads HE. 255–256 is an NADPH binding site; that stretch reads RG.

Belongs to the GTP cyclohydrolase I family. QueF type 2 subfamily. Homodimer.

It localises to the cytoplasm. It catalyses the reaction 7-aminomethyl-7-carbaguanine + 2 NADP(+) = 7-cyano-7-deazaguanine + 2 NADPH + 3 H(+). The protein operates within tRNA modification; tRNA-queuosine biosynthesis. Its function is as follows. Catalyzes the NADPH-dependent reduction of 7-cyano-7-deazaguanine (preQ0) to 7-aminomethyl-7-deazaguanine (preQ1). This chain is NADPH-dependent 7-cyano-7-deazaguanine reductase, found in Histophilus somni (strain 129Pt) (Haemophilus somnus).